We begin with the raw amino-acid sequence, 860 residues long: Leucine--tRNA ligase (860 aa).

The short motif at 42 to 52 (PYPSGRLHMGH) is the 'HIGH' region element. Positions 619–623 (KMSKS) match the 'KMSKS' region motif. Lysine 622 is a binding site for ATP.

This sequence belongs to the class-I aminoacyl-tRNA synthetase family.

The protein resides in the cytoplasm. The enzyme catalyses tRNA(Leu) + L-leucine + ATP = L-leucyl-tRNA(Leu) + AMP + diphosphate. This is Leucine--tRNA ligase from Erwinia tasmaniensis (strain DSM 17950 / CFBP 7177 / CIP 109463 / NCPPB 4357 / Et1/99).